A 117-amino-acid polypeptide reads, in one-letter code: Large ribosomal subunit protein bL20 (117 aa).

The protein belongs to the bacterial ribosomal protein bL20 family.

Functionally, binds directly to 23S ribosomal RNA and is necessary for the in vitro assembly process of the 50S ribosomal subunit. It is not involved in the protein synthesizing functions of that subunit. The polypeptide is Large ribosomal subunit protein bL20 (Lawsonia intracellularis (strain PHE/MN1-00)).